Consider the following 202-residue polypeptide: Glycerol-3-phosphate acyltransferase (202 aa).

5 helical membrane-spanning segments follow: residues 3-23 (NLIIYAFIYLLSSIPFGLILA), 87-107 (LLWSVAVLAILGHCFSIYLLF), 118-138 (GAMIVLLPLEVLTAFIVWVVI), 144-164 (ISSLASLAALLAFVVSSFIFN), and 167-187 (LEIHTHAPVFIIAFIIVYKHL).

The protein belongs to the PlsY family. In terms of assembly, probably interacts with PlsX.

It is found in the cell inner membrane. The enzyme catalyses an acyl phosphate + sn-glycerol 3-phosphate = a 1-acyl-sn-glycero-3-phosphate + phosphate. The protein operates within lipid metabolism; phospholipid metabolism. Its function is as follows. Catalyzes the transfer of an acyl group from acyl-phosphate (acyl-PO(4)) to glycerol-3-phosphate (G3P) to form lysophosphatidic acid (LPA). This enzyme utilizes acyl-phosphate as fatty acyl donor, but not acyl-CoA or acyl-ACP. The sequence is that of Glycerol-3-phosphate acyltransferase from Campylobacter jejuni (strain RM1221).